A 365-amino-acid polypeptide reads, in one-letter code: Putative F-box/kelch-repeat protein At3g16880 (365 aa).

Positions Met1–Gln47 constitute an F-box domain. Kelch repeat units follow at residues Arg98–Ser149 and Ile155–Asn205.

This chain is Putative F-box/kelch-repeat protein At3g16880, found in Arabidopsis thaliana (Mouse-ear cress).